Consider the following 583-residue polypeptide: Aspartate--tRNA ligase (583 aa).

L-aspartate is bound at residue glutamate 174. The tract at residues 198–201 (QITK) is aspartate. Residue arginine 220 participates in L-aspartate binding. ATP is bound by residues 220 to 222 (RDE) and glutamine 229. An L-aspartate-binding site is contributed by histidine 443. Residue glutamate 477 coordinates ATP. Residue arginine 484 participates in L-aspartate binding. 529–532 (GLDR) lines the ATP pocket.

Belongs to the class-II aminoacyl-tRNA synthetase family. Type 1 subfamily. In terms of assembly, homodimer.

It is found in the cytoplasm. The catalysed reaction is tRNA(Asp) + L-aspartate + ATP = L-aspartyl-tRNA(Asp) + AMP + diphosphate. Its function is as follows. Catalyzes the attachment of L-aspartate to tRNA(Asp) in a two-step reaction: L-aspartate is first activated by ATP to form Asp-AMP and then transferred to the acceptor end of tRNA(Asp). This Streptococcus thermophilus (strain ATCC BAA-491 / LMD-9) protein is Aspartate--tRNA ligase.